The primary structure comprises 160 residues: Phosphopantetheine adenylyltransferase (160 aa).

Thr10 serves as a coordination point for substrate. Residues 10–11 (TF) and His18 contribute to the ATP site. Residues Lys42, Leu74, and Arg88 each coordinate substrate. Residues 89–91 (GLR), Glu99, and 124–130 (NSFISST) each bind ATP.

It belongs to the bacterial CoaD family. As to quaternary structure, homohexamer. Mg(2+) serves as cofactor.

Its subcellular location is the cytoplasm. It catalyses the reaction (R)-4'-phosphopantetheine + ATP + H(+) = 3'-dephospho-CoA + diphosphate. The protein operates within cofactor biosynthesis; coenzyme A biosynthesis; CoA from (R)-pantothenate: step 4/5. Its function is as follows. Reversibly transfers an adenylyl group from ATP to 4'-phosphopantetheine, yielding dephospho-CoA (dPCoA) and pyrophosphate. This is Phosphopantetheine adenylyltransferase from Aeromonas salmonicida (strain A449).